Consider the following 137-residue polypeptide: Large ribosomal subunit protein uL16 (137 aa).

A compositionally biased stretch (basic residues) spans M1–N17. Positions M1–G24 are disordered.

It belongs to the universal ribosomal protein uL16 family. In terms of assembly, part of the 50S ribosomal subunit.

Functionally, binds 23S rRNA and is also seen to make contacts with the A and possibly P site tRNAs. This is Large ribosomal subunit protein uL16 from Aeromonas salmonicida (strain A449).